The primary structure comprises 268 residues: Chymotrypsin-C (268 aa).

A signal peptide spans 1-16 (MLGITVFTTFLAYASS). The propeptide at 17–29 (CGAPIFQPNLSAR) is activation peptide. 5 disulfide bridges follow: C17/C141, C59/C75, C155/C222, C186/C202, and C212/C243. N25 carries an N-linked (GlcNAc...) asparagine glycan. The Peptidase S1 domain maps to 30–268 (VVGGEDAIPH…IDWINQKLQL (239 aa)). Residues H74 and D121 each act as charge relay system in the active site. S216 serves as the catalytic Charge relay system.

The protein belongs to the peptidase S1 family. Elastase subfamily. As to quaternary structure, monomer. The zymogen is secreted as a ternary complex composed of procarboxypeptidase A, chymotrypsinogen C and proproteinase E. Pancreas.

It is found in the secreted. The protein localises to the extracellular space. It carries out the reaction Preferential cleavage: Leu-|-Xaa, Tyr-|-Xaa, Phe-|-Xaa, Met-|-Xaa, Trp-|-Xaa, Gln-|-Xaa, Asn-|-Xaa.. In terms of biological role, regulates activation and degradation of trypsinogens and procarboxypeptidases by targeting specific cleavage sites within their zymogen precursors. Has chymotrypsin-type protease activity and hypocalcemic activity. The protein is Chymotrypsin-C (CTRC) of Bos taurus (Bovine).